A 148-amino-acid polypeptide reads, in one-letter code: Puroindoline-A (148 aa).

Residues 1–19 (MKALFLIGLLALVASTAFA) form the signal peptide. A propeptide spanning residues 20-28 (QYSEVVGSY) is cleaved from the precursor. Residues 147-148 (YW) constitute a propeptide, removed in mature form.

Five disulfide bonds are present. As to expression, endosperm and aleurone layer of developing kernels. In the aleurone layer, mainly localized to starch granules and the surface of the plasma membrane, forming a uniform layer, also abundant in the intercellular space. In the endosperm, mainly localized to starch granules and the plasma membrane, but less abundant in the intercellular space. Not found in roots or coleoptiles.

The protein resides in the membrane. It localises to the secreted. The protein localises to the extracellular space. In terms of biological role, acts as a membranotoxin, probably through its antibacterial and antifungal activities, contributing to the defense mechanism of the plant against predators. Forms monovalent cation-selective ion channels in membranes. Has antibacterial activity against the Gram-positive bacteria S.aureus and C.michiganensis, and the Gram-negative bacteria E.coli, P.syringae pv phaseoli, A.tumefaciens and E.carotovora subsp carotovora. Acts synergistically with PINB against bacteria. Contributes to grain texture and hardness. The polypeptide is Puroindoline-A (PINA) (Triticum aestivum (Wheat)).